The sequence spans 837 residues: MANILKTIIENDKGEIRRLEKMADKVFKYEDQMAALTDDQLKAKTVEFKERYQNGESLDSLLYEAFAVVREGAKRVLGLFPYKVQVMGGIVLHHGDVPEMRTGEGKTLTATMPVYLNALSGKGVHVVTVNEYLSERDATEMGELYSWLGLSVGINLATKSPMEKKEAYECDITYSTNSEIGFDYLRDNMVVRAENMVQRPLNYALVDEVDSILIDEARTPLIVSGANAVETSQLYHMADHYVKSLNKDDYIIDVQSKTIGLSDSGIDRAESYFKLENLYDIENVALTHFIDNALRANYIMLLDIDYVVSEEQEILIVDQFTGRTMEGRRYSDGLHQAIEAKEGVPIQDETKTSASITYQNLFRMYKKLSGMTGTGKTEEEEFREIYNIRVIPIPTNRPVQRIDHSDLLYASIESKFKAVVEDVKARYQKGQPVLVGTVAVETSDYISKKLVAAGVPHEVLNAKNHYREAQIIMNAGQRGAVTIATNMAGRGTDIKLGEGVRELGGLCVIGTERHESRRIDNQLRGRSGRQGDPGESQFYLSLEDDLMKRFGSERLKGIFERLNMSEEAIESRMLTRQVEAAQKRVEGNNYDTRKQVLQYDDVMREQREIIYTQRYDVITADRDLAPEIQSMIKRTLERVVDGHARAKQDEKLEAILNFAKYNLLPEDSITMEDLSGLSDKAIKEELFQRALKVYDSQVSKLRDEEAVKEFQKVLILRVVDNKWTDHIDALDQLRNAVGLRGYAQNNPVVEYQAEGFRMFNDMIGSIEFDVTRLMMKAQIHEQERPQAERHISTTATRNIAAHQASMPEDLDLSQIGRNELCPCGSGKKFKNCHGKRQ.

ATP is bound by residues glutamine 85, 103 to 107, and aspartate 493; that span reads GEGKT. Zn(2+) is bound by residues cysteine 821, cysteine 823, cysteine 832, and histidine 833.

This sequence belongs to the SecA family. In terms of assembly, monomer and homodimer. Part of the essential Sec protein translocation apparatus which comprises SecA, SecYEG and auxiliary proteins SecDF. Other proteins may also be involved. Requires Zn(2+) as cofactor.

Its subcellular location is the cell membrane. It localises to the cytoplasm. It carries out the reaction ATP + H2O + cellular proteinSide 1 = ADP + phosphate + cellular proteinSide 2.. Its function is as follows. Part of the Sec protein translocase complex. Interacts with the SecYEG preprotein conducting channel. Has a central role in coupling the hydrolysis of ATP to the transfer of proteins into and across the cell membrane, serving as an ATP-driven molecular motor driving the stepwise translocation of polypeptide chains across the membrane. In Streptococcus pneumoniae (strain P1031), this protein is Protein translocase subunit SecA.